Consider the following 170-residue polypeptide: Adenine phosphoribosyltransferase (170 aa).

The protein belongs to the purine/pyrimidine phosphoribosyltransferase family. In terms of assembly, homodimer.

Its subcellular location is the cytoplasm. The enzyme catalyses AMP + diphosphate = 5-phospho-alpha-D-ribose 1-diphosphate + adenine. The protein operates within purine metabolism; AMP biosynthesis via salvage pathway; AMP from adenine: step 1/1. Its function is as follows. Catalyzes a salvage reaction resulting in the formation of AMP, that is energically less costly than de novo synthesis. This Prochlorococcus marinus (strain AS9601) protein is Adenine phosphoribosyltransferase.